Reading from the N-terminus, the 346-residue chain is Small ribosomal subunit biogenesis GTPase RsgA 2 (346 aa).

Positions 93-248 constitute a CP-type G domain; the sequence is EEQLIAANFD…VIDTPGMREF (156 aa). GTP-binding positions include 138–141 and 190–198; these read TKAD and GSSGVGKSS. 4 residues coordinate Zn(2+): Cys-271, Cys-276, His-278, and Cys-284.

It belongs to the TRAFAC class YlqF/YawG GTPase family. RsgA subfamily. Monomer. Associates with 30S ribosomal subunit, binds 16S rRNA. It depends on Zn(2+) as a cofactor.

It is found in the cytoplasm. In terms of biological role, one of several proteins that assist in the late maturation steps of the functional core of the 30S ribosomal subunit. Helps release RbfA from mature subunits. May play a role in the assembly of ribosomal proteins into the subunit. Circularly permuted GTPase that catalyzes slow GTP hydrolysis, GTPase activity is stimulated by the 30S ribosomal subunit. This is Small ribosomal subunit biogenesis GTPase RsgA 2 from Listeria monocytogenes serotype 4b (strain F2365).